Consider the following 345-residue polypeptide: Phosphate acyltransferase (345 aa).

Belongs to the PlsX family. As to quaternary structure, homodimer. Probably interacts with PlsY.

Its subcellular location is the cytoplasm. It catalyses the reaction a fatty acyl-[ACP] + phosphate = an acyl phosphate + holo-[ACP]. The protein operates within lipid metabolism; phospholipid metabolism. Catalyzes the reversible formation of acyl-phosphate (acyl-PO(4)) from acyl-[acyl-carrier-protein] (acyl-ACP). This enzyme utilizes acyl-ACP as fatty acyl donor, but not acyl-CoA. This chain is Phosphate acyltransferase, found in Wolbachia pipientis subsp. Culex pipiens (strain wPip).